The primary structure comprises 458 residues: Transcription termination factor Rho (458 aa).

Positions 1 to 23 are disordered; that stretch reads MNTTNKESTAELNNTESNNNYNN. Positions 10 to 23 are enriched in low complexity; the sequence is AELNNTESNNNYNN. The region spanning 78 to 153 is the Rho RNA-BD domain; it reads LIVGEGVLEV…LKVNRVNFED (76 aa). Residues 201–206, 213–218, and R244 contribute to the ATP site; these read GKGQRA and RTGKTV.

Belongs to the Rho family. Homohexamer. The homohexamer assembles into an open ring structure.

In terms of biological role, facilitates transcription termination by a mechanism that involves Rho binding to the nascent RNA, activation of Rho's RNA-dependent ATPase activity, and release of the mRNA from the DNA template. The chain is Transcription termination factor Rho from Rickettsia conorii (strain ATCC VR-613 / Malish 7).